A 120-amino-acid polypeptide reads, in one-letter code: NADH-ubiquinone oxidoreductase chain 3 (120 aa).

Helical transmembrane passes span 7–27 (FVYI…LFFL), 62–82 (FYLV…LFPF), and 89–109 (MTLL…IGFI).

This sequence belongs to the complex I subunit 3 family.

The protein localises to the mitochondrion membrane. The catalysed reaction is a ubiquinone + NADH + 5 H(+)(in) = a ubiquinol + NAD(+) + 4 H(+)(out). Its function is as follows. Core subunit of the mitochondrial membrane respiratory chain NADH dehydrogenase (Complex I) that is believed to belong to the minimal assembly required for catalysis. Complex I functions in the transfer of electrons from NADH to the respiratory chain. The immediate electron acceptor for the enzyme is believed to be ubiquinone. The polypeptide is NADH-ubiquinone oxidoreductase chain 3 (nad3) (Dictyostelium discoideum (Social amoeba)).